The following is a 315-amino-acid chain: Aspartate carbamoyltransferase catalytic subunit (315 aa).

Residues R64 and T65 each contribute to the carbamoyl phosphate site. L-aspartate is bound at residue K93. Carbamoyl phosphate contacts are provided by R114, H142, and Q145. Residues R175 and R237 each coordinate L-aspartate. 2 residues coordinate carbamoyl phosphate: L276 and P277.

It belongs to the aspartate/ornithine carbamoyltransferase superfamily. ATCase family. In terms of assembly, heterooligomer of catalytic and regulatory chains.

It catalyses the reaction carbamoyl phosphate + L-aspartate = N-carbamoyl-L-aspartate + phosphate + H(+). It participates in pyrimidine metabolism; UMP biosynthesis via de novo pathway; (S)-dihydroorotate from bicarbonate: step 2/3. Its function is as follows. Catalyzes the condensation of carbamoyl phosphate and aspartate to form carbamoyl aspartate and inorganic phosphate, the committed step in the de novo pyrimidine nucleotide biosynthesis pathway. In Thermofilum pendens (strain DSM 2475 / Hrk 5), this protein is Aspartate carbamoyltransferase catalytic subunit.